The chain runs to 180 residues: MLKPSDKWSWYFSDSEGYLMLNLGDDMLFRTNLSRNLLVDCAFIENPFTVDDASDFQLYKEHIACLPLSEPRKAELALYCVAAKRFHKPVQPKSWFFDVQGTGYTPQQGQLISLRNSLNSGIFIALEVGENATLCAYSDLVSFALNGSKTLEFGQVIKVMHDRMSDVNTLLYTPQMAMVS.

It belongs to the ZapC family. Interacts directly with FtsZ.

The protein resides in the cytoplasm. Its function is as follows. Contributes to the efficiency of the cell division process by stabilizing the polymeric form of the cell division protein FtsZ. Acts by promoting interactions between FtsZ protofilaments and suppressing the GTPase activity of FtsZ. This Vibrio cholerae serotype O1 (strain ATCC 39315 / El Tor Inaba N16961) protein is Cell division protein ZapC.